The following is a 205-amino-acid chain: Hydrogenase-4 component A (205 aa).

4Fe-4S ferredoxin-type domains are found at residues N2 to L31, K41 to D72, D73 to S102, and Q140 to G172. [4Fe-4S] cluster is bound by residues C12, C15, C18, C22, C51, C54, C59, C63, C82, C85, C88, C92, C146, C149, C158, and C162.

[4Fe-4S] cluster serves as cofactor.

Probable electron transfer protein for hydrogenase 4. The chain is Hydrogenase-4 component A from Escherichia coli (strain K12).